Consider the following 308-residue polypeptide: tRNA dimethylallyltransferase (308 aa).

14–21 (GPTASGKS) contributes to the ATP binding site. 16–21 (TASGKS) contacts substrate. The segment at 39-42 (DSMQ) is interaction with substrate tRNA.

This sequence belongs to the IPP transferase family. Monomer. Mg(2+) serves as cofactor.

It carries out the reaction adenosine(37) in tRNA + dimethylallyl diphosphate = N(6)-dimethylallyladenosine(37) in tRNA + diphosphate. In terms of biological role, catalyzes the transfer of a dimethylallyl group onto the adenine at position 37 in tRNAs that read codons beginning with uridine, leading to the formation of N6-(dimethylallyl)adenosine (i(6)A). The protein is tRNA dimethylallyltransferase of Bradyrhizobium sp. (strain ORS 278).